Consider the following 259-residue polypeptide: DNA-directed RNA polymerase subunit Rpo3 (259 aa).

Belongs to the archaeal Rpo3/eukaryotic RPB3 RNA polymerase subunit family. Part of the RNA polymerase complex.

The protein localises to the cytoplasm. The catalysed reaction is RNA(n) + a ribonucleoside 5'-triphosphate = RNA(n+1) + diphosphate. In terms of biological role, DNA-dependent RNA polymerase (RNAP) catalyzes the transcription of DNA into RNA using the four ribonucleoside triphosphates as substrates. The chain is DNA-directed RNA polymerase subunit Rpo3 from Pyrobaculum arsenaticum (strain DSM 13514 / JCM 11321 / PZ6).